The primary structure comprises 367 residues: DNA replication and repair protein RecF (367 aa).

30 to 37 (GANGSGKT) contributes to the ATP binding site.

It belongs to the RecF family.

The protein localises to the cytoplasm. Functionally, the RecF protein is involved in DNA metabolism; it is required for DNA replication and normal SOS inducibility. RecF binds preferentially to single-stranded, linear DNA. It also seems to bind ATP. The protein is DNA replication and repair protein RecF of Pseudomonas syringae pv. tomato (strain ATCC BAA-871 / DC3000).